A 332-amino-acid polypeptide reads, in one-letter code: MTKHASLAPLLESFFLQRLMQQRQASPHTISSYRDTFRQLLKFAERRLRKPPSRLNFEEIDAPLIVAFLDDLENRQGISVRSRNLRLTAIHSFFRYAAFEIPEHSAQIQRVLAIPSKRFTRTLVNFLTRPEVDALLAAPDRSTWSGRRDHAFLLVAVQTGLRLSEITGLKRDDLFFGTGAHLRVIGKGRKERCTPFAKSTTAVLRNWLKEPQRGDQGILFPSARGERLSVHGVQYMLNKHRQIASAMSPSLEGKRVTVHRLRHTMAMDLLQAGVDRAVIALWLGHESVETTQIYLEATLAMKEAALAKTSPYSGKSSRFRPDDNLLAFLNSL.

In terms of domain architecture, Core-binding (CB) spans 5–98 (ASLAPLLESF…AIHSFFRYAA (94 aa)). A Tyr recombinase domain is found at 122-307 (TLVNFLTRPE…TLAMKEAALA (186 aa)). Residues R162, K187, H259, R262, and H285 contribute to the active site. The O-(3'-phospho-DNA)-tyrosine intermediate role is filled by Y294.

Belongs to the 'phage' integrase family.

The chain is Putative integrase/recombinase y4rC from Sinorhizobium fredii (strain NBRC 101917 / NGR234).